We begin with the raw amino-acid sequence, 674 residues long: Pesticidal crystal protein Cry24Aa (674 aa).

It belongs to the delta endotoxin family.

Promotes colloidosmotic lysis by binding to the midgut epithelial cells of insects. This chain is Pesticidal crystal protein Cry24Aa (cry24Aa), found in Bacillus thuringiensis subsp. jegathesan.